A 936-amino-acid polypeptide reads, in one-letter code: 2-oxoglutarate dehydrogenase E1 component (936 aa).

Belongs to the alpha-ketoglutarate dehydrogenase family. As to quaternary structure, homodimer. Part of the 2-oxoglutarate dehydrogenase (OGDH) complex composed of E1 (2-oxoglutarate dehydrogenase), E2 (dihydrolipoamide succinyltransferase) and E3 (dihydrolipoamide dehydrogenase); the complex contains multiple copies of the three enzymatic components (E1, E2 and E3). It depends on thiamine diphosphate as a cofactor.

The enzyme catalyses N(6)-[(R)-lipoyl]-L-lysyl-[protein] + 2-oxoglutarate + H(+) = N(6)-[(R)-S(8)-succinyldihydrolipoyl]-L-lysyl-[protein] + CO2. E1 component of the 2-oxoglutarate dehydrogenase (OGDH) complex which catalyzes the decarboxylation of 2-oxoglutarate, the first step in the conversion of 2-oxoglutarate to succinyl-CoA and CO(2). This chain is 2-oxoglutarate dehydrogenase E1 component (sucA), found in Rickettsia prowazekii (strain Madrid E).